The primary structure comprises 235 residues: Retron Ec48 transmembrane protein (235 aa).

The next 2 membrane-spanning stretches (helical) occupy residues 11-31 (IVGV…FETI) and 64-84 (AFGW…ALMT).

It localises to the cell inner membrane. Functionally, membrane component of antiviral defense system Retron Ec48, composed of a non-coding RNA (ncRNA), a reverse transcriptase (RT) and this membrane protein. Expression of this retron confers protection against bacteriophages lambda, T2, T4, T5 and T7. At multiplicity of infection (MOI) of 0.02 cultures grow normally when infected with lambda without collapsing, at MOI 2 cultures enter growth stasis. At MOI 3 cell membranes are permeabilized within 15 minutes of infection but do not lyse, suggesting the phage are not able to finish a replication cycle. Antiviral defense is suppressed by mutations that knockout the lambda gam expression or phage T7 gp5.9 expression; both viral genes inhibit host RecBCD. The Ec48 retron may sense the integrity of the RecBCD enzyme; when RecBCD is perturbed by viral proteins the Ec48 effector (the membrane protein) is activated, leading to abortive infection and bacterial growth arrest. The chain is Retron Ec48 transmembrane protein from Escherichia coli.